Reading from the N-terminus, the 1960-residue chain is Transcription factor 20 (1960 aa).

Positions 1–18 (MQSFREQSSYHGNQQSYP) are enriched in polar residues. A disordered region spans residues 1-287 (MQSFREQSSY…GSNAQAYGTQ (287 aa)). A compositionally biased stretch (gly residues) spans 42–60 (GGTGGSSGSSGSGSGGGRR). The residue at position 60 (R60) is an Omega-N-methylarginine. Residues 61–75 (GAAAAAAAMASETSG) are compositionally biased toward low complexity. Residues 122-131 (QGSSFGNQYG) are compositionally biased toward polar residues. A compositionally biased stretch (low complexity) spans 164–192 (SAQYQQQASSQQQQQQVQQLRQQLYQSHQ). Positions 193–219 (PLPQATGQPASSSSHLQPMQRPSTLPS) are enriched in polar residues. Low complexity predominate over residues 236–259 (QSSASSSSSSSFPSPQRFSQSGQS). Polar residues-rich tracts occupy residues 260–270 (YDGSYNVNAGS) and 277–287 (VGSNAQAYGTQ). Residue K304 forms a Glycyl lysine isopeptide (Lys-Gly) (interchain with G-Cter in SUMO2) linkage. Disordered regions lie at residues 305 to 328 (IPQGTQQGQQQQQPQQQQHPSQHV) and 360 to 392 (FHQNFSPISNPSPAASVVQSPSCSSTPSPLMQT). Low complexity-rich tracts occupy residues 306 to 322 (PQGTQQGQQQQQPQQQQ) and 368 to 388 (SNPSPAASVVQSPSCSSTPSP). Residues S419 and S430 each carry the phosphoserine modification. The tract at residues 476–748 (SDALTPQKKT…HGERKGRNEK (273 aa)) is disordered. 2 stretches are compositionally biased toward polar residues: residues 497 to 508 (SCTNSEGSSQPE) and 537 to 547 (LSGQSTSSDTT). 4 positions are modified to phosphoserine: S538, S559, S574, and S583. An N6-acetyllysine modification is found at K602. The span at 616-628 (RVEKPGGQDKGSQ) shows a compositional bias: basic and acidic residues. S640 is subject to Phosphoserine. The segment covering 665–677 (GNKNGDNNSNHNG) has biased composition (low complexity). Residues 693 to 702 (TSRTEPSKSP) are compositionally biased toward polar residues. Glycyl lysine isopeptide (Lys-Gly) (interchain with G-Cter in SUMO2) cross-links involve residues K710, K733, K748, K823, K832, and K844. Residues 732–748 (EKGDFTGHGERKGRNEK) are compositionally biased toward basic and acidic residues. S871 bears the Phosphoserine mark. Glycyl lysine isopeptide (Lys-Gly) (interchain with G-Cter in SUMO2) cross-links involve residues K920 and K922. The interval 920–1037 (KLKSQSGQIK…GDPHHMNPHM (118 aa)) is disordered. K929 is covalently cross-linked (Glycyl lysine isopeptide (Lys-Gly) (interchain with G-Cter in SUMO1); alternate). K929 is covalently cross-linked (Glycyl lysine isopeptide (Lys-Gly) (interchain with G-Cter in SUMO2); alternate). Polar residues predominate over residues 936–945 (SKSQASFNNK). The segment covering 946-961 (KSGDHCHPPSIKHESY) has biased composition (basic and acidic residues). A Glycyl lysine isopeptide (Lys-Gly) (interchain with G-Cter in SUMO2) cross-link involves residue K957. A phosphoserine mark is found at S966 and S1005. K1015 is covalently cross-linked (Glycyl lysine isopeptide (Lys-Gly) (interchain with G-Cter in SUMO2)). Position 1024 is an omega-N-methylarginine (R1024). At S1053 the chain carries Phosphoserine. Glycyl lysine isopeptide (Lys-Gly) (interchain with G-Cter in SUMO2) cross-links involve residues K1086, K1098, K1137, K1173, K1178, K1183, K1210, K1231, K1267, and K1274. Disordered regions lie at residues 1110–1142 (AAAQHRQEGPRKSPRQQQFLDRVRSPLKNDKDG), 1162–1285 (RCLM…GRLL), and 1303–1331 (SHSQDIKSIPKRDSSKDLPSPDSRNCPAV). Residues 1130-1142 (DRVRSPLKNDKDG) are compositionally biased toward basic and acidic residues. The interval 1170–1191 (LPNKGMELKHGSQKLQESCWDL) is leucine-zipper. Residues 1254–1268 (RRRVRSFISPIPSKR) carry the Nuclear localization signal motif. A compositionally biased stretch (basic and acidic residues) spans 1304–1318 (HSQDIKSIPKRDSSK). S1305 carries the post-translational modification Phosphoserine. K1309 participates in a covalent cross-link: Glycyl lysine isopeptide (Lys-Gly) (interchain with G-Cter in SUMO2). Phosphoserine is present on S1335. K1338 participates in a covalent cross-link: Glycyl lysine isopeptide (Lys-Gly) (interchain with G-Cter in SUMO2). S1361 is modified (phosphoserine). A disordered region spans residues 1384 to 1607 (DILSLKSGPP…TKQAVPIVEP (224 aa)). Glycyl lysine isopeptide (Lys-Gly) (interchain with G-Cter in SUMO2) cross-links involve residues K1389, K1409, K1428, and K1446. A compositionally biased stretch (basic and acidic residues) spans 1424–1451 (LHVEKPLPRSSEEWRGSVDDKVKTETHA). Residues 1464–1477 (MTSTTSQKPGSNQG) show a composition bias toward polar residues. Residue K1510 forms a Glycyl lysine isopeptide (Lys-Gly) (interchain with G-Cter in SUMO2) linkage. S1522 is subject to Phosphoserine. K1524 participates in a covalent cross-link: Glycyl lysine isopeptide (Lys-Gly) (interchain with G-Cter in SUMO2). The segment at residues 1537–1551 (GKKKGRPIGSVNKQK) is a DNA-binding region (a.T hook). Over residues 1555-1566 (QPPPPPPQPPQI) the composition is skewed to pro residues. A Nuclear localization signal motif is present at residues 1576-1600 (KPKKQRQRRERRKPGAQPRKRKTKQ). Over residues 1578–1599 (KKQRQRRERRKPGAQPRKRKTK) the composition is skewed to basic residues. K1613 is covalently cross-linked (Glycyl lysine isopeptide (Lys-Gly) (interchain with G-Cter in SUMO2)). Disordered stretches follow at residues 1660–1683 (LVRGRKGQRSLTPPPSSTESKALP) and 1732–1839 (TLPK…PELE). At S1669 the chain carries Phosphoserine. Phosphothreonine occurs at positions 1671, 1762, and 1764. Residues 1785-1792 (RFKRRHRS) carry the Nuclear localization signal motif. A C2HC pre-PHD-type; degenerate zinc finger spans residues 1829–1865 (PTTSEGGPELELQIPELPLDSNEFWVHEGCILWANGI). A PHD-type zinc finger spans residues 1885 to 1933 (MKCSHCQEAGATLGCYNKGCSFRYHYPCAIDADCLLHEENFSVRCPKHK). A disordered region spans residues 1939–1960 (PLPPLQNKTAKGSLSTEQSERG). Residues 1944–1960 (QNKTAKGSLSTEQSERG) show a composition bias toward polar residues.

Homodimer. Interacts with RNF4 and JUN. In terms of tissue distribution, expressed in most tissues, except in ovary and prostate. Isoform 1 is exclusively expressed in brain, heart and testis, and this form predominates in liver and kidney. Isoform 2 predominates in lung.

The protein resides in the nucleus. Transcriptional activator that binds to the regulatory region of MMP3 and thereby controls stromelysin expression. It stimulates the activity of various transcriptional activators such as JUN, SP1, PAX6 and ETS1, suggesting a function as a coactivator. In Homo sapiens (Human), this protein is Transcription factor 20 (TCF20).